A 364-amino-acid polypeptide reads, in one-letter code: Flagellar P-ring protein (364 aa).

The N-terminal stretch at methionine 1–alanine 21 is a signal peptide.

Belongs to the FlgI family. In terms of assembly, the basal body constitutes a major portion of the flagellar organelle and consists of four rings (L,P,S, and M) mounted on a central rod.

It localises to the periplasm. The protein localises to the bacterial flagellum basal body. Assembles around the rod to form the L-ring and probably protects the motor/basal body from shearing forces during rotation. The chain is Flagellar P-ring protein from Pseudoalteromonas translucida (strain TAC 125).